A 438-amino-acid chain; its full sequence is Proline--tRNA ligase (438 aa).

This sequence belongs to the class-II aminoacyl-tRNA synthetase family. ProS type 2 subfamily. As to quaternary structure, homodimer.

The protein resides in the cytoplasm. It carries out the reaction tRNA(Pro) + L-proline + ATP = L-prolyl-tRNA(Pro) + AMP + diphosphate. In terms of biological role, catalyzes the attachment of proline to tRNA(Pro) in a two-step reaction: proline is first activated by ATP to form Pro-AMP and then transferred to the acceptor end of tRNA(Pro). In Rickettsia canadensis (strain McKiel), this protein is Proline--tRNA ligase.